Here is a 156-residue protein sequence, read N- to C-terminus: Transcription elongation factor GreA (156 aa).

The stretch at 46-67 (AEYHAAREKQSFIEGRIKELEA) forms a coiled coil.

The protein belongs to the GreA/GreB family.

Functionally, necessary for efficient RNA polymerase transcription elongation past template-encoded arresting sites. The arresting sites in DNA have the property of trapping a certain fraction of elongating RNA polymerases that pass through, resulting in locked ternary complexes. Cleavage of the nascent transcript by cleavage factors such as GreA or GreB allows the resumption of elongation from the new 3'terminus. GreA releases sequences of 2 to 3 nucleotides. This chain is Transcription elongation factor GreA, found in Cereibacter sphaeroides (strain ATCC 17029 / ATH 2.4.9) (Rhodobacter sphaeroides).